Reading from the N-terminus, the 546-residue chain is MAELTISSDEIRSAIANYTSSYSAEASREEVGVVISAADGIAQVSGLPSVMANELLEFPGGVIGVAQNLDTNSIGVVVLGNFESLKEGDEVKRTGEVLSIPVGEEFLGRVINPLGQPIDGMGPITAEEDRVLELQAPSVLQRQPVEEPMQTGIKAIDAMTPIGRGQRQLIIGDRKTGKTAVCIDTILNQKANWESGDKNKQVRCIYVAIGQKGSTIAGVRHTLEQHGALEYTTIVAAPASDAAGFKWLAPFSGAALGQHWMYQGNHVLIIYDDLTKQAEAYRAISLLLRRPPGREAYPGDVFYLHSRLLERAAKLSDDMGAGSMTALPIIETKANDVSAFIPTNVISITDGQVFLESDLFNQGVRPAINVGVSVSRVGGAAQTKGMKKVAGNLRLELAAYRDLQAFAAFASDLDPASKAQLERGERLVELLKQSESSPQPVEYQMVSIFLADQGIFDVVPVEDVRRFEKELHDHLNSATPQVFEQIQGGTALTDESKDALVAAAKDFTPSFRTTEGNNLGTEAPVDPLAADDVNKTELNVSRKTAK.

ATP is bound at residue 172–179 (GDRKTGKT). Polar residues-rich tracts occupy residues 511–520 (FRTTEGNNLG) and 536–546 (TELNVSRKTAK). The interval 511–546 (FRTTEGNNLGTEAPVDPLAADDVNKTELNVSRKTAK) is disordered.

Belongs to the ATPase alpha/beta chains family. F-type ATPases have 2 components, CF(1) - the catalytic core - and CF(0) - the membrane proton channel. CF(1) has five subunits: alpha(3), beta(3), gamma(1), delta(1), epsilon(1). CF(0) has three main subunits: a(1), b(2) and c(9-12). The alpha and beta chains form an alternating ring which encloses part of the gamma chain. CF(1) is attached to CF(0) by a central stalk formed by the gamma and epsilon chains, while a peripheral stalk is formed by the delta and b chains.

It is found in the cell membrane. It catalyses the reaction ATP + H2O + 4 H(+)(in) = ADP + phosphate + 5 H(+)(out). Its function is as follows. Produces ATP from ADP in the presence of a proton gradient across the membrane. The alpha chain is a regulatory subunit. In Corynebacterium aurimucosum (strain ATCC 700975 / DSM 44827 / CIP 107346 / CN-1) (Corynebacterium nigricans), this protein is ATP synthase subunit alpha.